Here is a 182-residue protein sequence, read N- to C-terminus: Probable inosine/xanthosine triphosphatase (182 aa).

Mg(2+)-binding residues include glutamate 42 and aspartate 69.

This sequence belongs to the YjjX NTPase family. In terms of assembly, homodimer. Mg(2+) is required as a cofactor. Requires Mn(2+) as cofactor.

The catalysed reaction is XTP + H2O = XDP + phosphate + H(+). The enzyme catalyses ITP + H2O = IDP + phosphate + H(+). Functionally, phosphatase that hydrolyzes non-canonical purine nucleotides such as XTP and ITP to their respective diphosphate derivatives. Probably excludes non-canonical purines from DNA/RNA precursor pool, thus preventing their incorporation into DNA/RNA and avoiding chromosomal lesions. The polypeptide is Probable inosine/xanthosine triphosphatase (Methanothermobacter thermautotrophicus (strain ATCC 29096 / DSM 1053 / JCM 10044 / NBRC 100330 / Delta H) (Methanobacterium thermoautotrophicum)).